Reading from the N-terminus, the 204-residue chain is Rho GDP-dissociation inhibitor 1 (204 aa).

The disordered stretch occupies residues 1 to 36 (MAEQEPTAEQLAQIAAENEEDEHSVNYKPPAQKSIQ). An N-acetylalanine modification is found at alanine 2. At serine 34 the chain carries Phosphoserine. Lysine 43 carries the N6-acetyllysine modification. Serine 47 bears the Phosphoserine mark. 2 positions are modified to N6-acetyllysine: lysine 105 and lysine 127. Residues lysine 138 and lysine 141 each participate in a glycyl lysine isopeptide (Lys-Gly) (interchain with G-Cter in SUMO1); alternate cross-link. Residues lysine 138 and lysine 141 each participate in a glycyl lysine isopeptide (Lys-Gly) (interchain with G-Cter in SUMO2); alternate cross-link. N6-acetyllysine; alternate is present on lysine 141. Position 141 is an N6-succinyllysine; alternate (lysine 141). At lysine 178 the chain carries N6-acetyllysine.

The protein belongs to the Rho GDI family. In terms of assembly, monomer. Interacts with FER. Interacts with PLXNB3. Forms a heterodimer with RAC1. Interacts with RHOA, the affinity is increased by three orders of magnitude when RHOA is prenylated. Interacts with PSMD10; the interaction increases ARHGDIA association with RHOA, leading to ARHGDIA-mediated inactivation of RHOA and ROCK and prolonged AKT activation. Interacts with KANK2; the interaction is direct and may regulate the interaction of ARHGDIA with RHOA, RAC1 and CDC42. Interacts with RHOC. Interacts with CDC42. Interacts with NGFR (via death domain); NGFR binding decreases the affinity for RHOA. In terms of tissue distribution, in kidney glomerulus, expressed in podocytes and mesangial cells.

Its subcellular location is the cytoplasm. Its function is as follows. Controls Rho proteins homeostasis. Regulates the GDP/GTP exchange reaction of the Rho proteins by inhibiting the dissociation of GDP from them, and the subsequent binding of GTP to them. Retains Rho proteins such as CDC42, RAC1 and RHOA in an inactive cytosolic pool, regulating their stability and protecting them from degradation. Actively involved in the recycling and distribution of activated Rho GTPases in the cell, mediates extraction from membranes of both inactive and activated molecules due its exceptionally high affinity for prenylated forms. Through the modulation of Rho proteins, may play a role in cell motility regulation. In glioma cells, inhibits cell migration and invasion by mediating the signals of SEMA5A and PLXNB3 that lead to inactivation of RAC1. This is Rho GDP-dissociation inhibitor 1 (Arhgdia) from Mus musculus (Mouse).